The chain runs to 227 residues: uncharacterized protein (227 aa).

This is an uncharacterized protein from Ictalurid herpesvirus 1 (strain Auburn) (IcHV-1).